Consider the following 536-residue polypeptide: Nucleosome assembly protein 1-like 3 (536 aa).

2 disordered regions span residues 1-104 (MAEA…DKLP) and 160-338 (PTEE…KEDP). Residues 35-75 (SNSSSSTTSCGSTGSSSSSSSSSSSSSSSSSGSSGSSSNGS) show a composition bias toward low complexity. Basic residues predominate over residues 77 to 95 (LHQKKRVPGPSRRAQRRPS). Acidic residues predominate over residues 160–184 (PTEEECEWNSEEEFSGDEEMQDDTP). Composition is skewed to basic and acidic residues over residues 199-220 (GKEN…PEAK) and 227-269 (PKET…KTDS). Residues 287-300 (TQANAEYTDQPTED) are compositionally biased toward polar residues. The span at 306–324 (PVREAQKRVPETRPEERVN) shows a compositional bias: basic and acidic residues.

It belongs to the nucleosome assembly protein (NAP) family.

Its subcellular location is the nucleus. The sequence is that of Nucleosome assembly protein 1-like 3 (Nap1l3) from Rattus norvegicus (Rat).